The chain runs to 366 residues: 3-isopropylmalate dehydrogenase (366 aa).

Residue 76–89 (GPKWDHNPASLRPE) participates in NAD(+) binding. Substrate is bound by residues Arg96, Arg106, Arg134, and Asp222. The Mg(2+) site is built by Asp222, Asp246, and Asp250. 280–292 (GSAPDIAGQGKAN) serves as a coordination point for NAD(+).

The protein belongs to the isocitrate and isopropylmalate dehydrogenases family. LeuB type 1 subfamily. In terms of assembly, homodimer. Mg(2+) is required as a cofactor. The cofactor is Mn(2+).

It localises to the cytoplasm. The enzyme catalyses (2R,3S)-3-isopropylmalate + NAD(+) = 4-methyl-2-oxopentanoate + CO2 + NADH. It participates in amino-acid biosynthesis; L-leucine biosynthesis; L-leucine from 3-methyl-2-oxobutanoate: step 3/4. In terms of biological role, catalyzes the oxidation of 3-carboxy-2-hydroxy-4-methylpentanoate (3-isopropylmalate) to 3-carboxy-4-methyl-2-oxopentanoate. The product decarboxylates to 4-methyl-2 oxopentanoate. The polypeptide is 3-isopropylmalate dehydrogenase (leuB) (Heyndrickxia coagulans (Weizmannia coagulans)).